A 303-amino-acid polypeptide reads, in one-letter code: Foldase protein PrsA (303 aa).

The N-terminal stretch at M1–G20 is a signal peptide. A lipid anchor (N-palmitoyl cysteine) is attached at C21. Residue C21 is the site of S-diacylglycerol cysteine attachment. One can recognise a PpiC domain in the interval E137–K233.

It belongs to the PrsA family.

The protein resides in the cell membrane. It carries out the reaction [protein]-peptidylproline (omega=180) = [protein]-peptidylproline (omega=0). In terms of biological role, plays a major role in protein secretion by helping the post-translocational extracellular folding of several secreted proteins. The sequence is that of Foldase protein PrsA from Latilactobacillus sakei subsp. sakei (strain 23K) (Lactobacillus sakei subsp. sakei).